Here is a 336-residue protein sequence, read N- to C-terminus: tRNA N6-adenosine threonylcarbamoyltransferase (336 aa).

Fe cation is bound by residues His111 and His115. Substrate contacts are provided by residues 134–138 (LVSGG), Asp167, Gly180, and Asn270. A Fe cation-binding site is contributed by Asp298.

It belongs to the KAE1 / TsaD family. Requires Fe(2+) as cofactor.

The protein resides in the cytoplasm. The catalysed reaction is L-threonylcarbamoyladenylate + adenosine(37) in tRNA = N(6)-L-threonylcarbamoyladenosine(37) in tRNA + AMP + H(+). Functionally, required for the formation of a threonylcarbamoyl group on adenosine at position 37 (t(6)A37) in tRNAs that read codons beginning with adenine. Is involved in the transfer of the threonylcarbamoyl moiety of threonylcarbamoyl-AMP (TC-AMP) to the N6 group of A37, together with TsaE and TsaB. TsaD likely plays a direct catalytic role in this reaction. The polypeptide is tRNA N6-adenosine threonylcarbamoyltransferase (Acinetobacter baumannii (strain SDF)).